A 1036-amino-acid polypeptide reads, in one-letter code: UDP-N-acetylglucosamine--peptide N-acetylglucosaminyltransferase 110 kDa subunit (1036 aa).

Alanine 2 is modified (N-acetylalanine). 2 positions are modified to phosphoserine; by GSK3-beta; alternate: serine 3 and serine 4. Serine 3 and serine 4 each carry an O-linked (GlcNAc) serine; alternate glycan. TPR repeat units follow at residues 11–44, 79–112, 113–146, 147–180, 181–214, 215–248, 249–282, 283–316, 317–350, 351–384, 385–418, and 419–452; these read STGL…EPDN, AEAY…KPDF, IDGY…NPDL, YCVR…QPNF, AVAW…DPNF, LDAY…SPNH, AVVH…QPHF, PDAY…CPTH, ADSL…FPEF, AAAH…SPTF, ADAY…NPAF, and ADAH…KPDF. O-linked (GlcNAc) serine; by autocatalysis glycosylation occurs at serine 389. At threonine 444 the chain carries Phosphothreonine. Residues 453-463 form a TPR 13; truncated repeat; that stretch reads PDAYCNLAHCL. A DFP motif motif is present at residues 454 to 456; it reads DAY. A Nuclear localization signal motif is present at residues 478–493; it reads KLVSIVAEQLEKNRLP. Histidine 498 serves as the catalytic Proton acceptor. Residues glutamine 839, lysine 842, 896 to 898, 901 to 904, 920 to 922, and aspartate 925 contribute to the UDP site; these read APK, HVRR, and HTT. At tyrosine 979 the chain carries Phosphotyrosine. Residues 981-1000 are required for phosphatidylinositol 3,4,5-triphosphate binding; it reads KKIRGKVWKQRISSPLFNTK.

Belongs to the glycosyltransferase 41 family. O-GlcNAc transferase subfamily. As to quaternary structure, monomer; may exist in different oligomerization states in cells. Homotrimer, oligomerizes via TPR repeats 6 and 7. Trimerization is not necessary for activity in vitro, however it increases affinity for UDP-GlcNAc. A heterotrimer consisting of two 110 kDa subunits and one highly related 78 kDa subunit is isolated from liver. Component of a THAP1/THAP3-HCFC1-OGT complex. Component of the NSL complex at least composed of MOF/KAT8, KANSL1, KANSL2, KANSL3, MCRS1, PHF20, OGT1/OGT, WDR5 and HCFC1. Found in a complex with KIF5B, RHOT1, RHOT2 and TRAK1. Found in a complex composed of at least SINHCAF, SIN3A, HDAC1, SAP30, RBBP4, OGT and TET1. Component of a complex composed of KMT2E/MLL5, OGT and USP7; the complex stabilizes KMT2E/MLL5, preventing KMT2E/MLL5 ubiquitination and proteasomal-mediated degradation. Interacts (via TPRs 1-6) with SIN3A; the interaction mediates transcriptional repression in parallel with histone deacetylase. Interacts (via TPR 5-6) with TET1, TET2 and TET3. Interacts (via TPR repeats 6 and 7) with ATXN10. Interacts with NSD2. Interacts with PROSER1; this interaction mediates TET2 O-GlcNAcylation and stability by promoting the interaction between OGT and TET2. Several different immunologically-related forms of this protein are found in different tissues (with apparent molecular weights of 110, 80 and 78 kDa); they are probably the result of alternative splicing and/or proteolysis. Post-translationally, O-glycosylated; contains O-GlcNAc. Both p110 and p78 forms are O-glycosylated. In terms of processing, ubiquitinated by the SCF(FBXO31) complex, leading to its proteasomal degradation. Phosphorylation on Ser-3 or Ser-4 by GSK3-beta positively regulates its activity. Phosphorylation at Thr-444 by AMPK promotes nuclear localization. Post-translationally, glycosylated via autocatalysis; O-GlcNAcylation at Ser-389 promotes nuclear localization. Expressed in brain, heart, liver, thymus, muscle, lung, spleen, uterus and ovary; in the kidney only an immunologically-related 78 kDa band is present, which is also present in liver and muscle. In the pancreas, expressed in both exocrine acinar cells and in endocrine cells of the islets of Langerhans.

The protein resides in the cytoplasm. It localises to the nucleus. Its subcellular location is the cell membrane. It is found in the mitochondrion membrane. The protein localises to the cell projection. The catalysed reaction is L-seryl-[protein] + UDP-N-acetyl-alpha-D-glucosamine = 3-O-(N-acetyl-beta-D-glucosaminyl)-L-seryl-[protein] + UDP + H(+). It carries out the reaction L-threonyl-[protein] + UDP-N-acetyl-alpha-D-glucosamine = 3-O-(N-acetyl-beta-D-glucosaminyl)-L-threonyl-[protein] + UDP + H(+). It functions in the pathway protein modification; protein glycosylation. Its activity is regulated as follows. Inhibited by UDP, UTP and UDP-GlcNAc; 50 mM NaCl or KCl inhibit activity about 70%. Catalyzes the transfer of a single N-acetylglucosamine from UDP-GlcNAc to a serine or threonine residue in cytoplasmic and nuclear proteins resulting in their modification with a beta-linked N-acetylglucosamine (O-GlcNAc). Glycosylates a large and diverse number of proteins including histone H2B, AKT1, AMPK, ATG4B, CAPRIN1, EZH2, FNIP1, GSDMD, KRT7, LMNA, LMNB1, LMNB2, RPTOR, HOXA1, PFKL, KMT2E/MLL5, MAPT/TAU, TET2, RBL2, RET, NOD2 and HCFC1. Can regulate their cellular processes via cross-talk between glycosylation and phosphorylation or by affecting proteolytic processing. Involved in insulin resistance in muscle and adipocyte cells via glycosylating insulin signaling components and inhibiting the 'Thr-308' phosphorylation of AKT1, enhancing IRS1 phosphorylation and attenuating insulin signaling. Involved in glycolysis regulation by mediating glycosylation of 6-phosphofructokinase PFKL, inhibiting its activity. Plays a key role in chromatin structure by mediating O-GlcNAcylation of 'Ser-112' of histone H2B: recruited to CpG-rich transcription start sites of active genes via its interaction with TET proteins (TET1, TET2 or TET3). As part of the NSL complex indirectly involved in acetylation of nucleosomal histone H4 on several lysine residues. O-GlcNAcylation of 'Ser-75' of EZH2 increases its stability, and facilitating the formation of H3K27me3 by the PRC2/EED-EZH2 complex. Stabilizes KMT2E/MLL5 by mediating its glycosylation, thereby preventing KMT2E/MLL5 ubiquitination. Regulates circadian oscillation of the clock genes and glucose homeostasis in the liver. Stabilizes clock proteins BMAL1 and CLOCK through O-glycosylation, which prevents their ubiquitination and subsequent degradation. Promotes the CLOCK-BMAL1-mediated transcription of genes in the negative loop of the circadian clock such as PER1/2 and CRY1/2. O-glycosylates HCFC1 and regulates its proteolytic processing and transcriptional activity. Component of a THAP1/THAP3-HCFC1-OGT complex that is required for the regulation of the transcriptional activity of RRM1. Regulates mitochondrial motility in neurons by mediating glycosylation of TRAK1. Promotes autophagy by mediating O-glycosylation of ATG4B. Acts as a regulator of mTORC1 signaling by mediating O-glycosylation of RPTOR and FNIP1: O-GlcNAcylation of RPTOR in response to glucose sufficiency promotes activation of the mTORC1 complex. This chain is UDP-N-acetylglucosamine--peptide N-acetylglucosaminyltransferase 110 kDa subunit (Ogt), found in Rattus norvegicus (Rat).